The chain runs to 318 residues: Aspartate carbamoyltransferase catalytic subunit (318 aa).

Carbamoyl phosphate is bound by residues Arg-58 and Thr-59. Residue Lys-86 participates in L-aspartate binding. Residues Arg-108, His-141, and Gln-144 each contribute to the carbamoyl phosphate site. L-aspartate is bound by residues Arg-174 and Arg-226. Carbamoyl phosphate-binding residues include Gly-270 and Pro-271.

This sequence belongs to the aspartate/ornithine carbamoyltransferase superfamily. ATCase family. Heterododecamer (2C3:3R2) of six catalytic PyrB chains organized as two trimers (C3), and six regulatory PyrI chains organized as three dimers (R2).

The catalysed reaction is carbamoyl phosphate + L-aspartate = N-carbamoyl-L-aspartate + phosphate + H(+). The protein operates within pyrimidine metabolism; UMP biosynthesis via de novo pathway; (S)-dihydroorotate from bicarbonate: step 2/3. Catalyzes the condensation of carbamoyl phosphate and aspartate to form carbamoyl aspartate and inorganic phosphate, the committed step in the de novo pyrimidine nucleotide biosynthesis pathway. This Lactobacillus delbrueckii subsp. bulgaricus (strain ATCC BAA-365 / Lb-18) protein is Aspartate carbamoyltransferase catalytic subunit.